A 362-amino-acid polypeptide reads, in one-letter code: tRNA-specific 2-thiouridylase MnmA (362 aa).

Residues 8-15 (AMSGGVDS) and Met35 contribute to the ATP site. Residues 95 to 97 (NPD) are interaction with target base in tRNA. Cys100 acts as the Nucleophile in catalysis. A disulfide bond links Cys100 and Cys196. Gly124 contacts ATP. An interaction with tRNA region spans residues 146–148 (KDQ). Residue Cys196 is the Cysteine persulfide intermediate of the active site. Positions 303–304 (RY) are interaction with tRNA.

The protein belongs to the MnmA/TRMU family.

It localises to the cytoplasm. It catalyses the reaction S-sulfanyl-L-cysteinyl-[protein] + uridine(34) in tRNA + AH2 + ATP = 2-thiouridine(34) in tRNA + L-cysteinyl-[protein] + A + AMP + diphosphate + H(+). Its function is as follows. Catalyzes the 2-thiolation of uridine at the wobble position (U34) of tRNA, leading to the formation of s(2)U34. This chain is tRNA-specific 2-thiouridylase MnmA, found in Chlamydia abortus (strain DSM 27085 / S26/3) (Chlamydophila abortus).